A 322-amino-acid chain; its full sequence is Short chain dehydrogenase AOL_s00215g274 (322 aa).

Residues 47–48 (AV), 104–106 (IAV), 197–201 (YNVSK), and 230–232 (VAT) contribute to the NAD(+) site. Catalysis depends on Y197, which acts as the Proton acceptor.

Belongs to the short-chain dehydrogenases/reductases (SDR) family.

It participates in secondary metabolite biosynthesis; terpenoid biosynthesis. In terms of biological role, short chain dehydrogenase; part of the gene cluster that mediates the biosynthesis of sesquiterpenyl epoxy-cyclohexenoids (SECs) such as anthrobotrisins and arthrosporols, metabolites that possess a novel hybrid carbon skeleton consisting of a polyketide-derived epoxycyclohexenol combined with a terpenoid-derived monocyclic sesquiterpenol substructure (PKS-PTS hybrid). The SEC pathway plays an important role for fungal soil colonization via decreasing fungal nematode-capturing ability. Within the pathway, the cytochrome P450 monooxygenase AOL_s00215g274 is involved in specific regional ketone reductions at C-4 of farnesyl epoxy-quinone. The pathway begins with the biosynthesis of 6-methylsalicylic acid (6-MSA), the first precursor of the polyketide-derived epoxycyclohexenol in arthrosporols, by the polyketide synthase (PKS) AOL_s00215g283 via condensation of 1 acetate and 3 malonate units. The 6-methylsalicylic acid decarboxylase AOL_s00215g281 then catalyzes the decarboxylation of 6-methylsalicylic acid to yield m-cresol. The cytochrome P450 monooxygenase AOL_s00215g282 further oxidizes m-cresol to yield toluquinol. With the assistance of the oxidoreductase AOL_s00215g277, the polyprenyl transferase AOL_s00215g276 catalyzes the farnesylation of toluquinol to produce farnesyl hydroquinone, the hybrid precursor for biosynthesis of SECs. Farnesyl hydroquinone undergoes epoxidation and then subsequent dehydrogenation to form farnesyl epoxy-quinone, the first and simplest SEC. The cytochrome P450 monooxygenase AOL_s00215g278 and the FAD-dependent monooxygenase AOL_s00215g279 might be involved in the oxygenation of the phenol moiety, most likely in the epoxy formation. The cytochrome P450 monooxygenases AOL_s00215g274 and AOL_s00215g280 are involved in specific regional ketone reductions at respectively C-4 and C-1 of farnesyl epoxy-quinone PubMed:33823587. This is Short chain dehydrogenase AOL_s00215g274 from Arthrobotrys oligospora (strain ATCC 24927 / CBS 115.81 / DSM 1491) (Nematode-trapping fungus).